The primary structure comprises 201 residues: Recombination protein RecR (201 aa).

The C4-type zinc finger occupies 57–74 (CRICGFITSKDDDPCVIC). A Toprim domain is found at 82 to 178 (SKIFVVENSQ…KVTRLARGLS (97 aa)).

Belongs to the RecR family.

In terms of biological role, may play a role in DNA repair. It seems to be involved in an RecBC-independent recombinational process of DNA repair. It may act with RecF and RecO. The protein is Recombination protein RecR of Oenococcus oeni (strain ATCC BAA-331 / PSU-1).